Consider the following 293-residue polypeptide: Ribonuclease HIII (293 aa).

The 216-residue stretch at 78-293 (LPLIGTDEVG…TEKAKKRLER (216 aa)) folds into the RNase H type-2 domain. The a divalent metal cation site is built by D84, E85, and D187.

It belongs to the RNase HII family. RnhC subfamily. It depends on Mn(2+) as a cofactor. The cofactor is Mg(2+).

It localises to the cytoplasm. The catalysed reaction is Endonucleolytic cleavage to 5'-phosphomonoester.. Functionally, endonuclease that specifically degrades the RNA of RNA-DNA hybrids. This chain is Ribonuclease HIII (rnhC), found in Streptococcus pneumoniae serotype 4 (strain ATCC BAA-334 / TIGR4).